The following is a 145-amino-acid chain: D-aminoacyl-tRNA deacylase (145 aa).

Residues 137-138 (GP) carry the Gly-cisPro motif, important for rejection of L-amino acids motif.

Belongs to the DTD family. Homodimer.

It is found in the cytoplasm. It carries out the reaction glycyl-tRNA(Ala) + H2O = tRNA(Ala) + glycine + H(+). It catalyses the reaction a D-aminoacyl-tRNA + H2O = a tRNA + a D-alpha-amino acid + H(+). An aminoacyl-tRNA editing enzyme that deacylates mischarged D-aminoacyl-tRNAs. Also deacylates mischarged glycyl-tRNA(Ala), protecting cells against glycine mischarging by AlaRS. Acts via tRNA-based rather than protein-based catalysis; rejects L-amino acids rather than detecting D-amino acids in the active site. By recycling D-aminoacyl-tRNA to D-amino acids and free tRNA molecules, this enzyme counteracts the toxicity associated with the formation of D-aminoacyl-tRNA entities in vivo and helps enforce protein L-homochirality. The chain is D-aminoacyl-tRNA deacylase from Francisella tularensis subsp. holarctica (strain FTNF002-00 / FTA).